A 320-amino-acid polypeptide reads, in one-letter code: GDP-L-fucose synthase (320 aa).

Position 14-20 (14-20) interacts with NADP(+); sequence GGSGLVG. The active-site Proton donor/acceptor is the tyrosine 142. Residues lysine 146, 169–172, and histidine 185 each bind NADP(+); that span reads PTNI. Residues lysine 193, arginine 214, and aspartate 276 each coordinate substrate.

It belongs to the NAD(P)-dependent epimerase/dehydratase family. Fucose synthase subfamily.

The enzyme catalyses GDP-beta-L-fucose + NADP(+) = GDP-4-dehydro-alpha-D-rhamnose + NADPH + H(+). It participates in nucleotide-sugar biosynthesis; GDP-L-fucose biosynthesis via de novo pathway; GDP-L-fucose from GDP-alpha-D-mannose: step 2/2. Functionally, catalyzes the two-step NADP-dependent conversion of GDP-4-dehydro-6-deoxy-D-mannose to GDP-fucose, involving an epimerase and a reductase reaction. The chain is GDP-L-fucose synthase (ger) from Dictyostelium discoideum (Social amoeba).